A 502-amino-acid polypeptide reads, in one-letter code: Probable cytosol aminopeptidase (502 aa).

Residues lysine 269 and aspartate 274 each coordinate Mn(2+). Lysine 281 is a catalytic residue. Mn(2+) is bound by residues aspartate 292, aspartate 351, and glutamate 353. Residue arginine 355 is part of the active site.

It belongs to the peptidase M17 family. The cofactor is Mn(2+).

It localises to the cytoplasm. It carries out the reaction Release of an N-terminal amino acid, Xaa-|-Yaa-, in which Xaa is preferably Leu, but may be other amino acids including Pro although not Arg or Lys, and Yaa may be Pro. Amino acid amides and methyl esters are also readily hydrolyzed, but rates on arylamides are exceedingly low.. The enzyme catalyses Release of an N-terminal amino acid, preferentially leucine, but not glutamic or aspartic acids.. Its function is as follows. Presumably involved in the processing and regular turnover of intracellular proteins. Catalyzes the removal of unsubstituted N-terminal amino acids from various peptides. This chain is Probable cytosol aminopeptidase, found in Shewanella denitrificans (strain OS217 / ATCC BAA-1090 / DSM 15013).